Consider the following 499-residue polypeptide: Glycerol kinase (499 aa).

Position 13 (Thr-13) interacts with ADP. Positions 13, 14, and 15 each coordinate ATP. Thr-13 contributes to the sn-glycerol 3-phosphate binding site. Arg-17 is a binding site for ADP. Residues Arg-83, Glu-84, Tyr-135, and Asp-245 each coordinate sn-glycerol 3-phosphate. The glycerol site is built by Arg-83, Glu-84, Tyr-135, Asp-245, and Gln-246. Residues Thr-267 and Gly-310 each contribute to the ADP site. Residues Thr-267, Gly-310, Gln-314, and Gly-411 each coordinate ATP. 2 residues coordinate ADP: Gly-411 and Asn-415.

It belongs to the FGGY kinase family.

The enzyme catalyses glycerol + ATP = sn-glycerol 3-phosphate + ADP + H(+). The protein operates within polyol metabolism; glycerol degradation via glycerol kinase pathway; sn-glycerol 3-phosphate from glycerol: step 1/1. Its activity is regulated as follows. Inhibited by fructose 1,6-bisphosphate (FBP). Key enzyme in the regulation of glycerol uptake and metabolism. Catalyzes the phosphorylation of glycerol to yield sn-glycerol 3-phosphate. The protein is Glycerol kinase of Xanthomonas campestris pv. campestris (strain 8004).